The following is a 124-amino-acid chain: Schlafen-like protein (124 aa).

The protein belongs to the Schlafen family. Subgroup poxviridae B3 subfamily.

In Homo sapiens (Human), this protein is Schlafen-like protein.